A 132-amino-acid polypeptide reads, in one-letter code: Small ribosomal subunit protein uS8 (132 aa).

This sequence belongs to the universal ribosomal protein uS8 family. Part of the 30S ribosomal subunit. Contacts proteins S5 and S12.

Functionally, one of the primary rRNA binding proteins, it binds directly to 16S rRNA central domain where it helps coordinate assembly of the platform of the 30S subunit. In Streptococcus agalactiae serotype Ia (strain ATCC 27591 / A909 / CDC SS700), this protein is Small ribosomal subunit protein uS8.